A 258-amino-acid chain; its full sequence is Trans-aconitate 2-methyltransferase (258 aa).

The protein belongs to the methyltransferase superfamily. Tam family.

It localises to the cytoplasm. The catalysed reaction is trans-aconitate + S-adenosyl-L-methionine = (E)-3-(methoxycarbonyl)pent-2-enedioate + S-adenosyl-L-homocysteine. In terms of biological role, catalyzes the S-adenosylmethionine monomethyl esterification of trans-aconitate. The sequence is that of Trans-aconitate 2-methyltransferase from Yersinia pestis bv. Antiqua (strain Antiqua).